Reading from the N-terminus, the 78-residue chain is Defensin beta 136 (78 aa).

The N-terminal stretch at 1–21 (MNLCLSSLLFFLVILLPSGKG) is a signal peptide. 3 cysteine pairs are disulfide-bonded: Cys33–Cys60, Cys40–Cys54, and Cys44–Cys61.

This sequence belongs to the beta-defensin family.

Its subcellular location is the secreted. Functionally, host defense peptide that exhibits antimicrobial and antifungal activity. Exhibits antimicrobial activity against E.coli, S.aureus and C.albicans (in vitro). Has high lipopolysaccharide (LPS)-binding affinity, and may thereby be involved in immunoregulation through LPS neutralization. This is Defensin beta 136 (DEFB136) from Pan troglodytes (Chimpanzee).